The chain runs to 396 residues: Elongation factor Tu 1 (396 aa).

Positions 10–206 (KPHINVGTIG…AMDAHIPQPE (197 aa)) constitute a tr-type G domain. The G1 stretch occupies residues 19 to 26 (GHVDHGKT). Position 19–26 (19–26 (GHVDHGKT)) interacts with GTP. Residue threonine 26 participates in Mg(2+) binding. The tract at residues 60 to 64 (GITIA) is G2. A G3 region spans residues 81 to 84 (DCPG). GTP-binding positions include 81–85 (DCPGH) and 136–139 (NKAD). Positions 136–139 (NKAD) are G4. The segment at 174 to 176 (SAL) is G5.

This sequence belongs to the TRAFAC class translation factor GTPase superfamily. Classic translation factor GTPase family. EF-Tu/EF-1A subfamily. Monomer.

The protein resides in the cytoplasm. It catalyses the reaction GTP + H2O = GDP + phosphate + H(+). GTP hydrolase that promotes the GTP-dependent binding of aminoacyl-tRNA to the A-site of ribosomes during protein biosynthesis. The sequence is that of Elongation factor Tu 1 from Halorhodospira halophila (strain DSM 244 / SL1) (Ectothiorhodospira halophila (strain DSM 244 / SL1)).